A 103-amino-acid polypeptide reads, in one-letter code: Cycloviolacin-O9 (103 aa).

Residues 1–9 (AAFALPAFA) form the signal peptide. Residues 10–69 (SFEKDVITPAALEAVLNRKAPLYNIMMENDAILNVIANVKTVISNPVLEEALLKTNHGVN) constitute a propeptide that is removed on maturation. A cross-link (cyclopeptide (Gly-Asn)) is located at residues 70-99 (GIPCGESCVWIPCLTSAVGCSCKSKVCYRN). 3 disulfides stabilise this stretch: Cys-73–Cys-89, Cys-77–Cys-91, and Cys-82–Cys-96. Residues 100–103 (SLDN) constitute a propeptide that is removed on maturation.

In terms of processing, this is a cyclic peptide.

Functionally, probably participates in a plant defense mechanism. The chain is Cycloviolacin-O9 from Viola biflora (Yellow wood violet).